The primary structure comprises 204 residues: Putative t-SNARE coiled-coil homology domain-containing protein L657 (204 aa).

T-SNARE coiled-coil homology domains are found at residues 9 to 71 and 140 to 202; these read SDYY…MDHV and DNSR…IKHT. A coiled-coil region spans residues 159 to 181; that stretch reads VLEKQANDISNILDEQNNTLEII.

The protein is Putative t-SNARE coiled-coil homology domain-containing protein L657 of Acanthamoeba polyphaga (Amoeba).